The following is a 366-amino-acid chain: Endophilin-A (366 aa).

In terms of domain architecture, BAR spans threonine 18–serine 248. A coiled-coil region spans residues glutamine 227 to glutamate 247. Residues glycine 266–alanine 295 form a disordered region. Low complexity predominate over residues proline 277–proline 294. In terms of domain architecture, SH3 spans glutamine 305–proline 364.

It belongs to the endophilin family.

The protein localises to the cytoplasm. It is found in the membrane. Required presynaptically at the neuromuscular junction. Implicated in synaptic vesicle endocytosis. The protein is Endophilin-A of Drosophila willistoni (Fruit fly).